The primary structure comprises 192 residues: Thymidylate kinase (192 aa).

An ATP-binding site is contributed by G7–S14.

The protein belongs to the thymidylate kinase family.

The catalysed reaction is dTMP + ATP = dTDP + ADP. Functionally, phosphorylation of dTMP to form dTDP in both de novo and salvage pathways of dTTP synthesis. This Campylobacter fetus subsp. fetus (strain 82-40) protein is Thymidylate kinase.